A 447-amino-acid polypeptide reads, in one-letter code: Acyl-lipid (7-3)-desaturase (447 aa).

In terms of domain architecture, Cytochrome b5 heme-binding spans 36–94 (LTIVGDSVYDAKAFRSEHPGGAHFVSLFGGRDATEAFMEYHRRAWPKSRMSRFHVGSLA). H53 and H76 together coordinate heme. 3 helical membrane-spanning segments follow: residues 123–143 (GFAP…AIAL), 154–174 (LLPS…IQHD), and 185–205 (SVNL…ILWL). The short motif at 173–177 (HDANH) is the Histidine box-1 element. The Histidine box-2 signature appears at 208-213 (HVVMHH). 3 helical membrane-spanning segments follow: residues 244–264 (WLQH…LLFL), 286–306 (LFMP…ALPL), and 315–335 (AVCI…FFFI). Residues 386-390 (QIEHH) carry the Histidine box-3 motif.

This sequence belongs to the fatty acid desaturase type 1 family. It depends on Fe(2+) as a cofactor.

It localises to the membrane. The enzyme catalyses a (7Z,10Z,13Z,16Z,19Z)-docosapentaenoyl-containing glycerolipid + 2 Fe(II)-[cytochrome b5] + O2 + 2 H(+) = a (4Z,7Z,10Z,13Z,16Z,19Z)-docosahexaenoyl-containing glycerolipid + 2 Fe(III)-[cytochrome b5] + 2 H2O. It carries out the reaction a (7Z,10Z,13Z,16Z)-docosatetraenoyl-containing glycerolipid + 2 Fe(II)-[cytochrome b5] + O2 + 2 H(+) = a (4Z,7Z,10Z,13Z,16Z)-docosapentaenoyl-containing glycerolipid + 2 Fe(III)-[cytochrome b5] + 2 H2O. In terms of biological role, fatty acid desaturase that introduces a cis double bond at the 4-position in 22-carbon polyunsaturated fatty acids that contain a Delta(7) double bond, resulting in the production of delta-4 desaturated fatty acid docosahexanoic acid (DHA). In Rebecca salina (Marine microalga), this protein is Acyl-lipid (7-3)-desaturase.